A 319-amino-acid polypeptide reads, in one-letter code: Putative ribose-phosphate pyrophosphokinase 2 (319 aa).

ATP-binding positions include 40 to 42 (DGE) and 99 to 100 (RQ). Residue His-133 coordinates Mg(2+). Residues Asp-222 and 226 to 230 (NTGRT) each bind D-ribose 5-phosphate.

The protein belongs to the ribose-phosphate pyrophosphokinase family. Class I subfamily. In terms of assembly, homohexamer. It depends on Mg(2+) as a cofactor.

It is found in the cytoplasm. It catalyses the reaction D-ribose 5-phosphate + ATP = 5-phospho-alpha-D-ribose 1-diphosphate + AMP + H(+). The protein operates within metabolic intermediate biosynthesis; 5-phospho-alpha-D-ribose 1-diphosphate biosynthesis; 5-phospho-alpha-D-ribose 1-diphosphate from D-ribose 5-phosphate (route I): step 1/1. Involved in the biosynthesis of the central metabolite phospho-alpha-D-ribosyl-1-pyrophosphate (PRPP) via the transfer of pyrophosphoryl group from ATP to 1-hydroxyl of ribose-5-phosphate (Rib-5-P). The sequence is that of Putative ribose-phosphate pyrophosphokinase 2 from Streptococcus pneumoniae serotype 4 (strain ATCC BAA-334 / TIGR4).